A 150-amino-acid chain; its full sequence is UPF0756 membrane protein PMI1560 (150 aa).

4 consecutive transmembrane segments (helical) span residues 16–36 (GLGI…LLVI), 51–71 (YGMT…IATG), 82–102 (FLNW…WLGA), and 123–143 (VIGV…AGIL).

It belongs to the UPF0756 family.

It is found in the cell membrane. This Proteus mirabilis (strain HI4320) protein is UPF0756 membrane protein PMI1560.